The chain runs to 240 residues: Glutamine amidotransferase-like protein chry6 (240 aa).

The Glutamine amidotransferase type-1 domain maps to 13-205 (NFILDDTGGR…FVASDNPVLV (193 aa)). Cys-102 serves as the catalytic Nucleophile. Residues His-185 and Glu-187 contribute to the active site.

The protein belongs to the peptidase C26 family.

Its pathway is pigment biosynthesis. Functionally, glutamine amidotransferase-like protein; part of the gene cluster that mediates the biosynthesis of the yellow pigment chrysogine. Pyruvic acid and anthranilic acid are likely substrates for the nonribosomal peptide synthetase chry1/NRPS14, with pyruvic acid adenylated by the first A domain and anthranilic acid by the second. If pyruvic acid and anthranilic acid are merged and released from chry1/NRPS14 by hydrolysis, a subsequent amidation would lead to 2-pyruvoylaminobenzamide. This process is probably catalyzed by the amidotransferase chry2 using glutamine as amino donor. The dehydrogenase chry5 that has a terminal berberine bridge domain for C-N cyclization could catalyze the cyclization of 2-pyruvoylaminobenzamide to yield acetyl-4(3H)-quinazolidinone. A final reduction of acetyl-4(3H)-quinazolidinone catalyzed by the oxidoreductase chry4 would result in chrysogine. This Gibberella zeae (strain ATCC MYA-4620 / CBS 123657 / FGSC 9075 / NRRL 31084 / PH-1) (Wheat head blight fungus) protein is Glutamine amidotransferase-like protein chry6.